Consider the following 218-residue polypeptide: uncharacterized protein (218 aa).

A signal peptide spans 1-21 (MKKFVYKYSFGALLLLSGLSS). Cysteine 22 carries the N-palmitoyl cysteine lipid modification. Cysteine 22 is lipidated: S-diacylglycerol cysteine.

Belongs to the chlamydial CPn_0875/CT_734/TC_0107 family.

Its subcellular location is the cell membrane. This is an uncharacterized protein from Chlamydia muridarum (strain MoPn / Nigg).